The chain runs to 327 residues: Lipoyl synthase (327 aa).

Positions 72, 77, 83, 98, 102, 105, and 313 each coordinate [4Fe-4S] cluster. Positions 83-302 (CWSHGTATIM…RKVGLEKGFL (220 aa)) constitute a Radical SAM core domain.

The protein belongs to the radical SAM superfamily. Lipoyl synthase family. Requires [4Fe-4S] cluster as cofactor.

Its subcellular location is the cytoplasm. It catalyses the reaction [[Fe-S] cluster scaffold protein carrying a second [4Fe-4S](2+) cluster] + N(6)-octanoyl-L-lysyl-[protein] + 2 oxidized [2Fe-2S]-[ferredoxin] + 2 S-adenosyl-L-methionine + 4 H(+) = [[Fe-S] cluster scaffold protein] + N(6)-[(R)-dihydrolipoyl]-L-lysyl-[protein] + 4 Fe(3+) + 2 hydrogen sulfide + 2 5'-deoxyadenosine + 2 L-methionine + 2 reduced [2Fe-2S]-[ferredoxin]. The protein operates within protein modification; protein lipoylation via endogenous pathway; protein N(6)-(lipoyl)lysine from octanoyl-[acyl-carrier-protein]: step 2/2. Catalyzes the radical-mediated insertion of two sulfur atoms into the C-6 and C-8 positions of the octanoyl moiety bound to the lipoyl domains of lipoate-dependent enzymes, thereby converting the octanoylated domains into lipoylated derivatives. This Francisella tularensis subsp. mediasiatica (strain FSC147) protein is Lipoyl synthase.